The sequence spans 231 residues: Probable pyridoxamine 5'-phosphate oxidase (231 aa).

20–23 (QYEK) is a pyridoxal 5'-phosphate binding site. 74-77 (RLVL) lines the FMN pocket. Residue Lys79 coordinates pyridoxal 5'-phosphate. Residues 89–90 (FT), 96–97 (KK), and Gln119 contribute to the FMN site. Residues Tyr137, Arg141, and Ser145 each coordinate pyridoxal 5'-phosphate. Residues 154 to 155 (QS) and Trp202 contribute to the FMN site. Residue 208-210 (RLH) participates in pyridoxal 5'-phosphate binding. Residue Arg212 coordinates FMN.

It belongs to the pyridoxamine 5'-phosphate oxidase family. Homodimer. It depends on FMN as a cofactor.

The catalysed reaction is pyridoxamine 5'-phosphate + O2 + H2O = pyridoxal 5'-phosphate + H2O2 + NH4(+). It catalyses the reaction pyridoxine 5'-phosphate + O2 = pyridoxal 5'-phosphate + H2O2. The protein operates within cofactor metabolism; pyridoxal 5'-phosphate salvage; pyridoxal 5'-phosphate from pyridoxamine 5'-phosphate: step 1/1. It functions in the pathway cofactor metabolism; pyridoxal 5'-phosphate salvage; pyridoxal 5'-phosphate from pyridoxine 5'-phosphate: step 1/1. Functionally, catalyzes the oxidation of either pyridoxine 5'-phosphate (PNP) or pyridoxamine 5'-phosphate (PMP) into pyridoxal 5'-phosphate (PLP). This chain is Probable pyridoxamine 5'-phosphate oxidase, found in Schizosaccharomyces pombe (strain 972 / ATCC 24843) (Fission yeast).